The following is a 200-amino-acid chain: MNFKYIVAVSILIASAYARSEENDIQSLSQRDVLEEESLREIRGIGAAILSAGKSALKGLAKGLAEHFGKRTAEDHEVMKRLEAAIHSLSQRDVLEEESLREIRGIGAAILSAGKSALKGLAKGLAEHFGKRTAEEHEMMKRLEAVMRDLDSLDYPEEASEMETRSFNQEEIANLYTKKEKRILGPILGLVSNALGGLLG.

The or 18 signal peptide spans 1–16 (MNFKYIVAVSILIASA). A phenylalanine amide mark is found at phenylalanine 68 and phenylalanine 129.

It belongs to the bombinin family. As to expression, expressed by the skin glands.

It is found in the secreted. Functionally, has antimicrobial activity, but no hemolytic activity. Preference on killing Gram-negative non-enteric bacteria. This is Bombinin-like peptides 3 from Bombina orientalis (Oriental fire-bellied toad).